Consider the following 173-residue polypeptide: MTALDIQISVEEGDWPSEDELQGLSTRILDVTVAFLIAEEKQPFPDDPPELSLVFTDDQSIREINAEWRNQDKPTNVLSFPAFPVTPGNMPGPMLGDIIVAYETLEREAAEMEKPFEEHLTHLLVHGFLHLFGYDHIEDDEAERMEGLETRILARLGLSDPYGDQPRIDSLEQ.

Zn(2+) is bound by residues His-126, His-130, and His-136.

This sequence belongs to the endoribonuclease YbeY family. Zn(2+) serves as cofactor.

It is found in the cytoplasm. Its function is as follows. Single strand-specific metallo-endoribonuclease involved in late-stage 70S ribosome quality control and in maturation of the 3' terminus of the 16S rRNA. The sequence is that of Endoribonuclease YbeY from Sinorhizobium fredii (strain NBRC 101917 / NGR234).